Reading from the N-terminus, the 399-residue chain is S-adenosylmethionine synthase (399 aa).

His-16 lines the ATP pocket. Asp-18 lines the Mg(2+) pocket. A K(+)-binding site is contributed by Glu-44. 2 residues coordinate L-methionine: Glu-57 and Gln-100. Residues Gln-100 to Glu-110 form a flexible loop region. ATP contacts are provided by residues Asp-177–Lys-179, Arg-244–Phe-245, Asp-253, Arg-259–Lys-260, Ala-276, and Lys-280. Asp-253 provides a ligand contact to L-methionine. Lys-284 serves as a coordination point for L-methionine.

The protein belongs to the AdoMet synthase family. In terms of assembly, homotetramer; dimer of dimers. The cofactor is Mg(2+). It depends on K(+) as a cofactor.

Its subcellular location is the cytoplasm. The catalysed reaction is L-methionine + ATP + H2O = S-adenosyl-L-methionine + phosphate + diphosphate. Its pathway is amino-acid biosynthesis; S-adenosyl-L-methionine biosynthesis; S-adenosyl-L-methionine from L-methionine: step 1/1. Its function is as follows. Catalyzes the formation of S-adenosylmethionine (AdoMet) from methionine and ATP. The overall synthetic reaction is composed of two sequential steps, AdoMet formation and the subsequent tripolyphosphate hydrolysis which occurs prior to release of AdoMet from the enzyme. The chain is S-adenosylmethionine synthase from Lactococcus lactis subsp. cremoris (strain MG1363).